The following is a 680-amino-acid chain: Cytosolic endo-beta-N-acetylglucosaminidase 1 (680 aa).

Over residues 1–15 the composition is skewed to pro residues; sequence MSVAPPAPSPPPFDP. The segment at 1–21 is disordered; sequence MSVAPPAPSPPPFDPTKPSTP.

It belongs to the glycosyl hydrolase 85 family.

The protein localises to the cytoplasm. Its subcellular location is the cytosol. The enzyme catalyses an N(4)-(oligosaccharide-(1-&gt;3)-[oligosaccharide-(1-&gt;6)]-beta-D-Man-(1-&gt;4)-beta-D-GlcNAc-(1-&gt;4)-alpha-D-GlcNAc)-L-asparaginyl-[protein] + H2O = an oligosaccharide-(1-&gt;3)-[oligosaccharide-(1-&gt;6)]-beta-D-Man-(1-&gt;4)-D-GlcNAc + N(4)-(N-acetyl-beta-D-glucosaminyl)-L-asparaginyl-[protein]. Endoglycosidase that releases N-glycans from glycoproteins by cleaving the beta-1,4-glycosidic bond in the N,N'-diacetylchitobiose core. Involved in the production of high-mannose type N-glycans during plant development and fruit maturation. The sequence is that of Cytosolic endo-beta-N-acetylglucosaminidase 1 from Arabidopsis thaliana (Mouse-ear cress).